Reading from the N-terminus, the 626-residue chain is Division abnormally delayed protein (626 aa).

The signal sequence occupies residues 1–26 (MAARSVRLAQLLLFTLLCGFVGLSAA). Residues 41-52 (LHSATTHHRRRL) show a composition bias toward basic residues. The segment at 41–65 (LHSATTHHRRRLQRDSRAKDAVGGS) is disordered. Asn97 carries an N-linked (GlcNAc...) asparagine; atypical glycan. N-linked (GlcNAc...) asparagine glycosylation is found at Asn101, Asn150, and Asn187. Residues 533 to 607 (NSIQATHDIQ…GKTSGSNPLE (75 aa)) form a disordered region. 4 O-linked (Xyl...) (heparan sulfate) serine glycosylation sites follow: Ser549, Ser569, Ser573, and Ser601. Positions 565 to 575 (GAHGSGDGSGD) are enriched in gly residues. Residue Gly602 is the site of GPI-anchor amidated glycine attachment. Positions 603 to 626 (SNPLEGTATWMLLTLVTMLFSSCS) are cleaved as a propeptide — removed in mature form.

It belongs to the glypican family. In terms of assembly, interacts with nord; the interaction promotes dally degradation. Interacts with Magu. As part of the dally/ Magu complex, associates with fwe (isoforms ubi, LoseA and LoseB) and is unable to interact with fwe independently of Magu.

The protein resides in the cell membrane. In terms of biological role, cell surface proteoglycan that bears heparan sulfate. Functions as a coreceptor for growth factors and morphogens, such as the products of dpp, to regulate signaling and distribution of these ligands. Required for cell division patterning during postembryonic development of the nervous system. Plays a role in dpp/BMP signaling possibly by stabilizing dpp and thereby creating a morphological gradient during wing development. Might have a role in testis development. Functions with magu and fwe in a mechanism of scaling, which utilises apoptosis to ensure that the dpp patterning gradient remains proportional to the size of the growing wing. In this mechanism, fwe represses dally and Magu-dependent activity in expanding the gradient, and dally/Magu inhibits fwe-dependent apoptosis to keep cell death rate low. When the levels of these different proteins are optimally regulated the gradient correctly scales with organ growth but when this fails, fwe-mediated apoptosis is activated to trim the developing tissue to match the correct size of the gradient. The sequence is that of Division abnormally delayed protein (dally) from Drosophila melanogaster (Fruit fly).